The chain runs to 171 residues: UPF0398 protein spyM18_1659 (171 aa).

The protein belongs to the UPF0398 family.

The polypeptide is UPF0398 protein spyM18_1659 (Streptococcus pyogenes serotype M18 (strain MGAS8232)).